Here is a 349-residue protein sequence, read N- to C-terminus: uncharacterized protein (349 aa).

This is an uncharacterized protein from Escherichia coli (strain K12).